A 249-amino-acid polypeptide reads, in one-letter code: MTTPDGIVSALAVALARQSESHADCPLFNDPYAQVFIDAALSRGCQLPSDETSERINGIANYASSRTKWFDEYFIAAGAHGLEQMVIVAAGLDARAWRLPWVAGTTLFEIDHPGVLKFKNEALHEHGESPSVSRYVPVPADLSDGWSERLRDAGFDVSEPTAWAVEGLLPYVADGPHLLFDRIHEISPAGSRLAVEAVGTGVADWLSTQGWQVTVIGAQELMTRYGRCGDHSDTDAGMDTVFVNATRDR.

S-adenosyl-L-methionine contacts are provided by residues D111 and 141-142; that span reads DL.

Belongs to the UPF0677 family.

Functionally, exhibits S-adenosyl-L-methionine-dependent methyltransferase activity. The protein is Putative S-adenosyl-L-methionine-dependent methyltransferase Mjls_0570 of Mycobacterium sp. (strain JLS).